Here is a 110-residue protein sequence, read N- to C-terminus: MSEEKPKEGVKTENDHINLKVAGQDGSVVQFKIKRHTPLSKLMKAYCERQGLSMRQIRFRFDGQPINETDTPAQLEMEDEDTIDVFQQQTGGSASRGSVPTPNRCPDLCY.

Residues lysine 5 and lysine 7 each participate in a glycyl lysine isopeptide (Lys-Gly) (interchain with G-Cter in SUMO2) cross-link. A Glycyl lysine isopeptide (Lys-Gly) (interchain with G-Cter in SUMO); alternate cross-link involves residue lysine 11. Lysine 11 participates in a covalent cross-link: Glycyl lysine isopeptide (Lys-Gly) (interchain with G-Cter in SUMO2); alternate. The Ubiquitin-like domain occupies 15–92; that stretch reads DHINLKVAGQ…IDVFQQQTGG (78 aa). A compositionally biased stretch (polar residues) spans 88-101; it reads QQTGGSASRGSVPT. The tract at residues 88–110 is disordered; it reads QQTGGSASRGSVPTPNRCPDLCY. Glycine 92 participates in a covalent cross-link: Glycyl lysine isopeptide (Gly-Lys) (interchain with K-? in acceptor proteins). Residues 93 to 110 constitute a propeptide that is removed on maturation; it reads SASRGSVPTPNRCPDLCY.

It belongs to the ubiquitin family. SUMO subfamily. In terms of assembly, interacts with SAE2 and UBE2I. Covalently attached to a number of proteins. Interacts with USP25 (via ts SIM domain); the interaction sumoylates USP25 and inhibits its ubiquitin hydrolyzing activity. Interacts with BMAL1. Polymeric chains can be formed through Lys-11 cross-linking. In terms of processing, cleavage of precursor form by SENP1, SENP2 or SENP5 is necessary for function.

It localises to the cytoplasm. Its subcellular location is the nucleus. The protein localises to the PML body. Its function is as follows. Ubiquitin-like protein which can be covalently attached to target lysines either as a monomer or as a lysine-linked polymer. Does not seem to be involved in protein degradation and may function as an antagonist of ubiquitin in the degradation process. Plays a role in a number of cellular processes such as nuclear transport, DNA replication and repair, mitosis and signal transduction. Covalent attachment to its substrates requires prior activation by the E1 complex SAE1-SAE2 and linkage to the E2 enzyme UBE2I, and can be promoted by an E3 ligase such as PIAS1-4, RANBP2 or CBX4. Plays a role in the regulation of sumoylation status of SETX. The protein is Small ubiquitin-related modifier 3 of Mus musculus (Mouse).